The sequence spans 470 residues: Nuclear segregation protein BFR1 (470 aa).

Coiled-coil stretches lie at residues 17-178 (DKKL…NGLN) and 237-281 (NEFK…THAK). Phosphoserine is present on serine 260. The residue at position 336 (threonine 336) is a Phosphothreonine. The tract at residues 346 to 368 (APSKSKKYKKKNQQKNTENEQPA) is disordered. A compositionally biased stretch (basic residues) spans 349–358 (KSKKYKKKNQ). Serine 369 carries the phosphoserine modification. Positions 398 to 469 (NSDDVKITVE…EQEESEKDKE (72 aa)) form a coiled coil. The tract at residues 447-470 (QQVKKELEEKRLKEQEESEKDKEN) is disordered.

Its function is as follows. Implicated in secretion, nuclear segregation and in maintenance of cell size. This Saccharomyces cerevisiae (strain ATCC 204508 / S288c) (Baker's yeast) protein is Nuclear segregation protein BFR1 (BFR1).